Here is a 33-residue protein sequence, read N- to C-terminus: Neutrophil defensin 3 (33 aa).

3 disulfides stabilise this stretch: C3–C31, C5–C20, and C10–C30.

Belongs to the alpha-defensin family.

The protein localises to the secreted. Its function is as follows. Anti-fungal and bactericidal activity, greater against Gram-positive bacteria. This is Neutrophil defensin 3 from Mesocricetus auratus (Golden hamster).